A 427-amino-acid polypeptide reads, in one-letter code: 3-phosphoshikimate 1-carboxyvinyltransferase (427 aa).

3-phosphoshikimate-binding residues include Lys-22, Ser-23, and Arg-27. Position 22 (Lys-22) interacts with phosphoenolpyruvate. Gly-96 and Arg-124 together coordinate phosphoenolpyruvate. Residues Ser-169, Ser-170, Gln-171, Ser-197, Asp-313, Asn-336, and Lys-340 each coordinate 3-phosphoshikimate. Gln-171 contacts phosphoenolpyruvate. Asp-313 serves as the catalytic Proton acceptor. Residues Arg-344, Arg-386, and Lys-411 each contribute to the phosphoenolpyruvate site.

This sequence belongs to the EPSP synthase family. As to quaternary structure, monomer.

The protein resides in the cytoplasm. It carries out the reaction 3-phosphoshikimate + phosphoenolpyruvate = 5-O-(1-carboxyvinyl)-3-phosphoshikimate + phosphate. It participates in metabolic intermediate biosynthesis; chorismate biosynthesis; chorismate from D-erythrose 4-phosphate and phosphoenolpyruvate: step 6/7. Catalyzes the transfer of the enolpyruvyl moiety of phosphoenolpyruvate (PEP) to the 5-hydroxyl of shikimate-3-phosphate (S3P) to produce enolpyruvyl shikimate-3-phosphate and inorganic phosphate. The chain is 3-phosphoshikimate 1-carboxyvinyltransferase from Salmonella arizonae (strain ATCC BAA-731 / CDC346-86 / RSK2980).